The primary structure comprises 163 residues: NADH-quinone oxidoreductase subunit J (163 aa).

A run of 5 helical transmembrane segments spans residues 1–21, 30–50, 54–74, 94–114, and 138–158; these read MEFV…LVII, LYLI…GAFF, LEVV…IMML, IGPS…IFFV, and LLLV…VFHI.

Belongs to the complex I subunit 6 family. As to quaternary structure, composed of 13 different subunits. Subunits NuoA, H, J, K, L, M, N constitute the membrane sector of the complex.

The protein localises to the cell membrane. It catalyses the reaction a quinone + NADH + 5 H(+)(in) = a quinol + NAD(+) + 4 H(+)(out). In terms of biological role, NDH-1 shuttles electrons from NADH, via FMN and iron-sulfur (Fe-S) centers, to quinones in the respiratory chain. Couples the redox reaction to proton translocation (for every two electrons transferred, four hydrogen ions are translocated across the cytoplasmic membrane), and thus conserves the redox energy in a proton gradient. This chain is NADH-quinone oxidoreductase subunit J (nuoJ), found in Buchnera aphidicola subsp. Schizaphis graminum (strain Sg).